We begin with the raw amino-acid sequence, 809 residues long: Ubiquitin carboxyl-terminal hydrolase 1 (809 aa).

The 638-residue stretch at 101 to 738 (AGLVNDGNTC…GVFMLFYEYD (638 aa)) folds into the USP domain. Residue C110 is the Nucleophile of the active site. Positions 143-195 (NEHNEEGNGQESAQDEATHKKNTRKGGKVYGKHKKKLNRKSSSKEDEEKSQEP) are disordered. Positions 162 to 183 (KKNTRKGGKVYGKHKKKLNRKS) are enriched in basic residues. Basic and acidic residues predominate over residues 184–194 (SSKEDEEKSQE). Residues S530, S531, and S555 each carry the phosphoserine modification. Residues 569–596 (ASHYNHTKDISNYDPLNGEVDGVTSDDE) form a disordered region. Residues S618 and S638 each carry the phosphoserine modification. T652 bears the Phosphothreonine mark. Residues S653, S654, and S670 each carry the phosphoserine modification. H697 functions as the Proton acceptor in the catalytic mechanism. The tract at residues 750 to 809 (LEAIQSNNEEDDEKEQEQKGVQEPKESQEQGEGEEQEEGQEQMKFERTEDHRDISGKDVN) is disordered. S755 bears the Phosphoserine mark. The span at 765 to 777 (QEQKGVQEPKESQ) shows a compositional bias: basic and acidic residues. Over residues 778–789 (EQGEGEEQEEGQ) the composition is skewed to acidic residues. Residues 790-809 (EQMKFERTEDHRDISGKDVN) show a composition bias toward basic and acidic residues.

The protein belongs to the peptidase C19 family.

The catalysed reaction is Thiol-dependent hydrolysis of ester, thioester, amide, peptide and isopeptide bonds formed by the C-terminal Gly of ubiquitin (a 76-residue protein attached to proteins as an intracellular targeting signal).. Functionally, has an ATP-independent isopeptidase activity, cleaving at the C-terminus of the ubiquitin moiety in natural or engineered linear fusion proteins, irrespective of their size or the presence of an N-terminal extension to ubiquitin. This chain is Ubiquitin carboxyl-terminal hydrolase 1 (UBP1), found in Saccharomyces cerevisiae (strain ATCC 204508 / S288c) (Baker's yeast).